The following is a 244-amino-acid chain: L-xylulose reductase (244 aa).

Position 1 is an N-acetylmethionine (Met-1). 11 to 39 (LVTGAGKGIGRSTVLALQAAGAHVVAVSR) lines the NADP(+) pocket. An Omega-N-methylarginine modification is found at Arg-21. Ser-46 is subject to Phosphoserine. Ser-136 contributes to the substrate binding site. Tyr-149 functions as the Proton acceptor in the catalytic mechanism. Lys-153 is an active-site residue.

This sequence belongs to the short-chain dehydrogenases/reductases (SDR) family. As to quaternary structure, homotetramer. In terms of tissue distribution, highly expressed in kidney and liver. Expressed in epididymis. Weakly expressed in brain, heart, lung, spleen and testis.

The protein localises to the membrane. It localises to the cytoplasmic vesicle. It is found in the secretory vesicle. The protein resides in the acrosome. It catalyses the reaction xylitol + NADP(+) = L-xylulose + NADPH + H(+). In terms of biological role, catalyzes the NADPH-dependent reduction of several pentoses, tetroses, trioses, alpha-dicarbonyl compounds and L-xylulose. Participates in the uronate cycle of glucose metabolism. May play a role in the water absorption and cellular osmoregulation in the proximal renal tubules by producing xylitol, an osmolyte, thereby preventing osmolytic stress from occurring in the renal tubules. The sequence is that of L-xylulose reductase (DCXR) from Mesocricetus auratus (Golden hamster).